The sequence spans 300 residues: Acetyl-coenzyme A carboxylase carboxyl transferase subunit beta 2 (300 aa).

The 269-residue stretch at 26-294 (VWIKCPSCRE…ATAHKSEPIV (269 aa)) folds into the CoA carboxyltransferase N-terminal domain. Positions 30, 33, 49, and 51 each coordinate Zn(2+). The segment at 30–51 (CPSCRELIYHKQLAERMKVCRC) adopts a C4-type zinc-finger fold.

The protein belongs to the AccD/PCCB family. Acetyl-CoA carboxylase is a heterohexamer composed of biotin carboxyl carrier protein (AccB), biotin carboxylase (AccC) and two subunits each of ACCase subunit alpha (AccA) and ACCase subunit beta (AccD). Zn(2+) is required as a cofactor.

Its subcellular location is the cytoplasm. The catalysed reaction is N(6)-carboxybiotinyl-L-lysyl-[protein] + acetyl-CoA = N(6)-biotinyl-L-lysyl-[protein] + malonyl-CoA. Its pathway is lipid metabolism; malonyl-CoA biosynthesis; malonyl-CoA from acetyl-CoA: step 1/1. In terms of biological role, component of the acetyl coenzyme A carboxylase (ACC) complex. Biotin carboxylase (BC) catalyzes the carboxylation of biotin on its carrier protein (BCCP) and then the CO(2) group is transferred by the transcarboxylase to acetyl-CoA to form malonyl-CoA. This Roseiflexus sp. (strain RS-1) protein is Acetyl-coenzyme A carboxylase carboxyl transferase subunit beta 2.